Reading from the N-terminus, the 117-residue chain is uncharacterized protein (117 aa).

The first 23 residues, 1–23 (MVSEAEFMAALAKFAETSATASA), serve as a signal peptide directing secretion.

This is an uncharacterized protein from Archaeoglobus fulgidus (strain ATCC 49558 / DSM 4304 / JCM 9628 / NBRC 100126 / VC-16).